A 274-amino-acid chain; its full sequence is TIP41-like protein (274 aa).

Belongs to the TIP41 family.

This is TIP41-like protein (tiprl) from Dictyostelium discoideum (Social amoeba).